The chain runs to 356 residues: UDP-N-acetylglucosamine--N-acetylmuramyl-(pentapeptide) pyrophosphoryl-undecaprenol N-acetylglucosamine transferase (356 aa).

Residues 12 to 14 (TAG), Arg166, Ser196, and Gln291 contribute to the UDP-N-acetyl-alpha-D-glucosamine site.

This sequence belongs to the glycosyltransferase 28 family. MurG subfamily.

It localises to the cell membrane. It catalyses the reaction di-trans,octa-cis-undecaprenyl diphospho-N-acetyl-alpha-D-muramoyl-L-alanyl-D-glutamyl-meso-2,6-diaminopimeloyl-D-alanyl-D-alanine + UDP-N-acetyl-alpha-D-glucosamine = di-trans,octa-cis-undecaprenyl diphospho-[N-acetyl-alpha-D-glucosaminyl-(1-&gt;4)]-N-acetyl-alpha-D-muramoyl-L-alanyl-D-glutamyl-meso-2,6-diaminopimeloyl-D-alanyl-D-alanine + UDP + H(+). It functions in the pathway cell wall biogenesis; peptidoglycan biosynthesis. In terms of biological role, cell wall formation. Catalyzes the transfer of a GlcNAc subunit on undecaprenyl-pyrophosphoryl-MurNAc-pentapeptide (lipid intermediate I) to form undecaprenyl-pyrophosphoryl-MurNAc-(pentapeptide)GlcNAc (lipid intermediate II). The sequence is that of UDP-N-acetylglucosamine--N-acetylmuramyl-(pentapeptide) pyrophosphoryl-undecaprenol N-acetylglucosamine transferase from Geobacillus thermodenitrificans (strain NG80-2).